Consider the following 813-residue polypeptide: Lon protease (813 aa).

Residues 14–207 (LPLLPLRGII…ILTEILAREM (194 aa)) form the Lon N-terminal domain. 359–366 (GPPGVGKT) contributes to the ATP binding site. The Lon proteolytic domain maps to 595–776 (ESQVGVATGL…DQVIREALLE (182 aa)). Catalysis depends on residues S682 and K725.

The protein belongs to the peptidase S16 family. In terms of assembly, homohexamer. Organized in a ring with a central cavity.

Its subcellular location is the cytoplasm. The catalysed reaction is Hydrolysis of proteins in presence of ATP.. Its function is as follows. ATP-dependent serine protease that mediates the selective degradation of mutant and abnormal proteins as well as certain short-lived regulatory proteins. Required for cellular homeostasis and for survival from DNA damage and developmental changes induced by stress. Degrades polypeptides processively to yield small peptide fragments that are 5 to 10 amino acids long. Binds to DNA in a double-stranded, site-specific manner. In Heliobacterium modesticaldum (strain ATCC 51547 / Ice1), this protein is Lon protease.